The sequence spans 357 residues: Phenylalanine--tRNA ligase alpha subunit (357 aa).

Residue Glu259 participates in Mg(2+) binding.

The protein belongs to the class-II aminoacyl-tRNA synthetase family. Phe-tRNA synthetase alpha subunit type 1 subfamily. As to quaternary structure, tetramer of two alpha and two beta subunits. Mg(2+) is required as a cofactor.

It is found in the cytoplasm. The enzyme catalyses tRNA(Phe) + L-phenylalanine + ATP = L-phenylalanyl-tRNA(Phe) + AMP + diphosphate + H(+). This is Phenylalanine--tRNA ligase alpha subunit from Jannaschia sp. (strain CCS1).